The chain runs to 373 residues: Glutamate 5-kinase (373 aa).

K15 contacts ATP. S56, D143, and N155 together coordinate substrate. 175–176 (SD) is an ATP binding site. One can recognise a PUA domain in the interval 281–358 (KGTLTIDAGA…PDVMTILGIS (78 aa)).

This sequence belongs to the glutamate 5-kinase family.

The protein localises to the cytoplasm. It catalyses the reaction L-glutamate + ATP = L-glutamyl 5-phosphate + ADP. The protein operates within amino-acid biosynthesis; L-proline biosynthesis; L-glutamate 5-semialdehyde from L-glutamate: step 1/2. Catalyzes the transfer of a phosphate group to glutamate to form L-glutamate 5-phosphate. In Bradyrhizobium diazoefficiens (strain JCM 10833 / BCRC 13528 / IAM 13628 / NBRC 14792 / USDA 110), this protein is Glutamate 5-kinase.